Reading from the N-terminus, the 387-residue chain is MAATLTWILLFVGLLAGLRDTKAQQTTLYPLVGRVFVHPLEHATFLRLPEHIAVPPTVRLTYQAHLQGHPDLPRWLRYTQRSPYSPGFLYGTPTPEDRGRQVIEVTAYNRDSFDTTRQRLLLLIEDPEGPRLPYQAEFLVRSHDVEEVLPSTPANRFLTALGGLWELGELQLLNITSALDRGGRVPLPIEGRKEGVYIKVGSATPFSTCLKMVASPDSYARCAQGQPPLLSCYDSLAPHFRVDWCNVSLVDKSVPEPLDEVPTPGDGILEHDPFFCPPTEATGRDFLADALVTLLVPLLVALLLTLLLAYIMCCRREGQLKRDMATSDIQMVHHCTIHGNTEELRQMAARREVPRPLSTLPMFNVRTGERLPPRVDSAQVPLILDQH.

The signal sequence occupies residues 1 to 23 (MAATLTWILLFVGLLAGLRDTKA). Residues 24-290 (QQTTLYPLVG…ATGRDFLADA (267 aa)) are Extracellular-facing. N-linked (GlcNAc...) asparagine glycans are attached at residues N174 and N246. The chain crosses the membrane as a helical span at residues 291–311 (LVTLLVPLLVALLLTLLLAYI). Topologically, residues 312–387 (MCCRREGQLK…AQVPLILDQH (76 aa)) are cytoplasmic. S377 bears the Phosphoserine mark.

The protein belongs to the sarcoglycan alpha/epsilon family. As to quaternary structure, interacts with the syntrophin SNTA1. Cross-link to form 2 major subcomplexes: one consisting of SGCB, SGCD and SGCG and the other consisting of SGCB and SGCD. The association between SGCB and SGCG is particularly strong while SGCA is loosely associated with the other sarcoglycans. In terms of tissue distribution, strongly expressed in skeletal and heart muscle.

It localises to the cell membrane. The protein resides in the sarcolemma. It is found in the cytoplasm. The protein localises to the cytoskeleton. Its function is as follows. Component of the sarcoglycan complex, a subcomplex of the dystrophin-glycoprotein complex which forms a link between the F-actin cytoskeleton and the extracellular matrix. This Mesocricetus auratus (Golden hamster) protein is Alpha-sarcoglycan (SGCA).